The chain runs to 201 residues: 3-isopropylmalate dehydratase small subunit 1 (201 aa).

This sequence belongs to the LeuD family. LeuD type 1 subfamily. In terms of assembly, heterodimer of LeuC and LeuD.

The catalysed reaction is (2R,3S)-3-isopropylmalate = (2S)-2-isopropylmalate. The protein operates within amino-acid biosynthesis; L-leucine biosynthesis; L-leucine from 3-methyl-2-oxobutanoate: step 2/4. Catalyzes the isomerization between 2-isopropylmalate and 3-isopropylmalate, via the formation of 2-isopropylmaleate. The sequence is that of 3-isopropylmalate dehydratase small subunit 1 from Salmonella typhimurium (strain LT2 / SGSC1412 / ATCC 700720).